A 344-amino-acid polypeptide reads, in one-letter code: MQTLTIIRPDDMHLHLRDGDALKAVVPYTARQMGRAVIMPNLKPPVVSVADALAYKARIMAALPEGSAFEPLMTLYLTDNATSELVREAKAAGIVAFKLYPAGATTNSDSGVTDLFKLIPVLEEMAKQGILFLVHGEVTDPEIDIFDREAAFIGRVMKPVLAQVPNLKVVFEHITTAEAARLVLEAGDNVAATVTPQHLLLNRNDLLVGGVRPHHFCLPVLKRETHRQALVAAVTGEKAHKFFLGTDSAPHAKSAKENACGCAGMFSAMTAVELYAEVFEKAGALDKLEAFASKNGARFYGIPENAGTITLVKQSQTVPASVPYGDGELVPMRAGGEIGWTVQY.

Zn(2+) is bound by residues H13 and H15. Residues 15–17 and N41 contribute to the substrate site; that span reads HLR. Zn(2+)-binding residues include K98, H135, and H173. K98 is modified (N6-carboxylysine). H135 serves as a coordination point for substrate. L218 lines the substrate pocket. D247 serves as a coordination point for Zn(2+). Residue D247 is part of the active site. Substrate-binding residues include H251 and A263.

The protein belongs to the metallo-dependent hydrolases superfamily. DHOase family. Class II DHOase subfamily. In terms of assembly, homodimer. The cofactor is Zn(2+).

It carries out the reaction (S)-dihydroorotate + H2O = N-carbamoyl-L-aspartate + H(+). Its pathway is pyrimidine metabolism; UMP biosynthesis via de novo pathway; (S)-dihydroorotate from bicarbonate: step 3/3. Functionally, catalyzes the reversible cyclization of carbamoyl aspartate to dihydroorotate. In Neisseria meningitidis serogroup C (strain 053442), this protein is Dihydroorotase.